Here is a 254-residue protein sequence, read N- to C-terminus: MNMKNKSEKEMTHFGFQNVYKDKKTSLVSNVFHTVASQYDLMNDLMSFGIHRMWKRFTIYRSEVYVGCIVLDLAGGTGDLSIQFSRLVGNTGIVVLADINDSMLHIGQKKLRDLGILNNVIYIQADAEALPFSENTFDCVAVSFGLRNFTNKEQALFSIHRVLKPRGKLLILDFGVPNFKVLHKIYDLYSFHILPKIGKCITQDINSYRYLVESIRMHPDQETLKNMIIRTGFSNVEYFNMTFGIAVLHCAYKC.

S-adenosyl-L-methionine is bound by residues threonine 77, aspartate 98, 126-127 (DA), and serine 143.

Belongs to the class I-like SAM-binding methyltransferase superfamily. MenG/UbiE family.

The enzyme catalyses a 2-demethylmenaquinol + S-adenosyl-L-methionine = a menaquinol + S-adenosyl-L-homocysteine + H(+). The catalysed reaction is a 2-methoxy-6-(all-trans-polyprenyl)benzene-1,4-diol + S-adenosyl-L-methionine = a 5-methoxy-2-methyl-3-(all-trans-polyprenyl)benzene-1,4-diol + S-adenosyl-L-homocysteine + H(+). Its pathway is quinol/quinone metabolism; menaquinone biosynthesis; menaquinol from 1,4-dihydroxy-2-naphthoate: step 2/2. The protein operates within cofactor biosynthesis; ubiquinone biosynthesis. Its function is as follows. Methyltransferase required for the conversion of demethylmenaquinol (DMKH2) to menaquinol (MKH2) and the conversion of 2-polyprenyl-6-methoxy-1,4-benzoquinol (DDMQH2) to 2-polyprenyl-3-methyl-6-methoxy-1,4-benzoquinol (DMQH2). This is Ubiquinone/menaquinone biosynthesis C-methyltransferase UbiE from Blochmanniella pennsylvanica (strain BPEN).